A 284-amino-acid chain; its full sequence is Ribosomal RNA small subunit methyltransferase A (284 aa).

S-adenosyl-L-methionine-binding residues include N27, L29, G54, E75, D100, and N125.

The protein belongs to the class I-like SAM-binding methyltransferase superfamily. rRNA adenine N(6)-methyltransferase family. RsmA subfamily.

Its subcellular location is the cytoplasm. The enzyme catalyses adenosine(1518)/adenosine(1519) in 16S rRNA + 4 S-adenosyl-L-methionine = N(6)-dimethyladenosine(1518)/N(6)-dimethyladenosine(1519) in 16S rRNA + 4 S-adenosyl-L-homocysteine + 4 H(+). In terms of biological role, specifically dimethylates two adjacent adenosines (A1518 and A1519) in the loop of a conserved hairpin near the 3'-end of 16S rRNA in the 30S particle. May play a critical role in biogenesis of 30S subunits. In Protochlamydia amoebophila (strain UWE25), this protein is Ribosomal RNA small subunit methyltransferase A.